Here is a 177-residue protein sequence, read N- to C-terminus: UPF0114 protein HP_0189 (177 aa).

3 helical membrane-spanning segments follow: residues 15 to 35 (WLLAPLCIAMSLVLVVLGYVF), 54 to 74 (LVLSALGLVDLLFMAGLVLMV), and 145 to 165 (PIFWQVVIHLVFVCSALLAAV).

The protein belongs to the UPF0114 family.

It is found in the cell membrane. This Helicobacter pylori (strain ATCC 700392 / 26695) (Campylobacter pylori) protein is UPF0114 protein HP_0189.